Reading from the N-terminus, the 321-residue chain is Glucokinase (321 aa).

Residue 8–13 (GDVGGT) coordinates ATP.

It belongs to the bacterial glucokinase family.

The protein resides in the cytoplasm. It catalyses the reaction D-glucose + ATP = D-glucose 6-phosphate + ADP + H(+). The protein is Glucokinase of Salmonella agona (strain SL483).